A 38-amino-acid chain; its full sequence is Large ribosomal subunit protein bL36 (38 aa).

This sequence belongs to the bacterial ribosomal protein bL36 family.

This is Large ribosomal subunit protein bL36 from Phytoplasma australiense.